The chain runs to 304 residues: Probable endonuclease 4 (304 aa).

The Zn(2+) site is built by His-75, His-115, Glu-151, Asp-185, His-188, His-221, Asp-234, His-236, and Glu-266.

It belongs to the AP endonuclease 2 family. Requires Zn(2+) as cofactor.

The catalysed reaction is Endonucleolytic cleavage to 5'-phosphooligonucleotide end-products.. Functionally, endonuclease IV plays a role in DNA repair. It cleaves phosphodiester bonds at apurinic or apyrimidinic (AP) sites, generating a 3'-hydroxyl group and a 5'-terminal sugar phosphate. The protein is Probable endonuclease 4 of Ureaplasma urealyticum serovar 10 (strain ATCC 33699 / Western).